Here is a 183-residue protein sequence, read N- to C-terminus: Probable chemoreceptor glutamine deamidase CheD (183 aa).

The protein belongs to the CheD family.

It catalyses the reaction L-glutaminyl-[protein] + H2O = L-glutamyl-[protein] + NH4(+). Functionally, probably deamidates glutamine residues to glutamate on methyl-accepting chemotaxis receptors (MCPs), playing an important role in chemotaxis. The chain is Probable chemoreceptor glutamine deamidase CheD from Sinorhizobium medicae (strain WSM419) (Ensifer medicae).